The chain runs to 199 residues: Recombination protein RecR (199 aa).

The C4-type zinc finger occupies 57-72 (CQSCRTFTEQSLCPIC). The region spanning 81-176 (GVICVVETPA…IISRIAHGVP (96 aa)) is the Toprim domain.

Belongs to the RecR family.

Functionally, may play a role in DNA repair. It seems to be involved in an RecBC-independent recombinational process of DNA repair. It may act with RecF and RecO. The polypeptide is Recombination protein RecR (Shewanella denitrificans (strain OS217 / ATCC BAA-1090 / DSM 15013)).